The chain runs to 437 residues: GTPase Obg (437 aa).

Residues 2–160 (SMFLDTAKIS…RQLELELKIL (159 aa)) enclose the Obg domain. Residues 161-338 (ADVGLVGFPS…LLEATAELLA (178 aa)) enclose the OBG-type G domain. GTP contacts are provided by residues 167-174 (GFPSVGKS), 192-196 (FTTIV), 214-217 (DLPG), 284-287 (NKMD), and 319-321 (SSL). Mg(2+) contacts are provided by S174 and T194. In terms of domain architecture, OCT spans 359 to 437 (GFAETEKDFE…IGKFEFEFVD (79 aa)).

Belongs to the TRAFAC class OBG-HflX-like GTPase superfamily. OBG GTPase family. Monomer. The cofactor is Mg(2+).

The protein resides in the cytoplasm. Functionally, an essential GTPase which binds GTP, GDP and possibly (p)ppGpp with moderate affinity, with high nucleotide exchange rates and a fairly low GTP hydrolysis rate. Plays a role in control of the cell cycle, stress response, ribosome biogenesis and in those bacteria that undergo differentiation, in morphogenesis control. The chain is GTPase Obg from Streptococcus pyogenes serotype M4 (strain MGAS10750).